A 164-amino-acid polypeptide reads, in one-letter code: Flavodoxin (164 aa).

In terms of domain architecture, Flavodoxin-like spans 4–160; sequence IGIFFGTDSG…RISKWVEQVK (157 aa).

It belongs to the flavodoxin family. Requires FMN as cofactor.

Its function is as follows. Low-potential electron donor to a number of redox enzymes. This chain is Flavodoxin (fldA), found in Helicobacter pylori (strain ATCC 700392 / 26695) (Campylobacter pylori).